A 226-amino-acid polypeptide reads, in one-letter code: Uracil-DNA glycosylase (226 aa).

The active-site Proton acceptor is aspartate 64.

Belongs to the uracil-DNA glycosylase (UDG) superfamily. UNG family.

It is found in the cytoplasm. The catalysed reaction is Hydrolyzes single-stranded DNA or mismatched double-stranded DNA and polynucleotides, releasing free uracil.. Its function is as follows. Excises uracil residues from the DNA which can arise as a result of misincorporation of dUMP residues by DNA polymerase or due to deamination of cytosine. The chain is Uracil-DNA glycosylase from Vibrio vulnificus (strain CMCP6).